We begin with the raw amino-acid sequence, 120 residues long: MFLLYEYDIFWAFLIISSLIPILVFFISGFLAPSSKGPEKLSSYESGIEPIGDAWLQFRIRYYMFALVFVVFDVETVFLYPWAMSFDVLGVSVFVEALIFVLILIVGLVYAWRKGALEWS.

The next 3 membrane-spanning stretches (helical) occupy residues 9–29, 64–84, and 88–108; these read IFWA…FISG, MFAL…PWAM, and VLGV…IVGL.

This sequence belongs to the complex I subunit 3 family. In terms of assembly, NDH is composed of at least 16 different subunits, 5 of which are encoded in the nucleus.

The protein resides in the plastid. It is found in the chloroplast thylakoid membrane. It carries out the reaction a plastoquinone + NADH + (n+1) H(+)(in) = a plastoquinol + NAD(+) + n H(+)(out). The enzyme catalyses a plastoquinone + NADPH + (n+1) H(+)(in) = a plastoquinol + NADP(+) + n H(+)(out). In terms of biological role, NDH shuttles electrons from NAD(P)H:plastoquinone, via FMN and iron-sulfur (Fe-S) centers, to quinones in the photosynthetic chain and possibly in a chloroplast respiratory chain. The immediate electron acceptor for the enzyme in this species is believed to be plastoquinone. Couples the redox reaction to proton translocation, and thus conserves the redox energy in a proton gradient. This chain is NAD(P)H-quinone oxidoreductase subunit 3, chloroplastic, found in Guizotia abyssinica (Niger).